Consider the following 169-residue polypeptide: MTSAIRIIGIDPGLRRTGWGVIETLGNSLRFIASGTVMSDGDMDLASRLCQLHDGLADVVHLHQPDEAAVEQTFVNKDAVATLKLGQARGIAMLVPARAGLPVAEYAPNAVKKSVIGVGHGDKQQIHMMLKILMPKAEFKGNDAADALAIAICHAHNRGGERMRRALAG.

Catalysis depends on residues D11, E71, and D143. D11, E71, and D143 together coordinate Mg(2+).

It belongs to the RuvC family. As to quaternary structure, homodimer which binds Holliday junction (HJ) DNA. The HJ becomes 2-fold symmetrical on binding to RuvC with unstacked arms; it has a different conformation from HJ DNA in complex with RuvA. In the full resolvosome a probable DNA-RuvA(4)-RuvB(12)-RuvC(2) complex forms which resolves the HJ. It depends on Mg(2+) as a cofactor.

Its subcellular location is the cytoplasm. The catalysed reaction is Endonucleolytic cleavage at a junction such as a reciprocal single-stranded crossover between two homologous DNA duplexes (Holliday junction).. Its function is as follows. The RuvA-RuvB-RuvC complex processes Holliday junction (HJ) DNA during genetic recombination and DNA repair. Endonuclease that resolves HJ intermediates. Cleaves cruciform DNA by making single-stranded nicks across the HJ at symmetrical positions within the homologous arms, yielding a 5'-phosphate and a 3'-hydroxyl group; requires a central core of homology in the junction. The consensus cleavage sequence is 5'-(A/T)TT(C/G)-3'. Cleavage occurs on the 3'-side of the TT dinucleotide at the point of strand exchange. HJ branch migration catalyzed by RuvA-RuvB allows RuvC to scan DNA until it finds its consensus sequence, where it cleaves and resolves the cruciform DNA. This Allorhizobium ampelinum (strain ATCC BAA-846 / DSM 112012 / S4) (Agrobacterium vitis (strain S4)) protein is Crossover junction endodeoxyribonuclease RuvC.